The primary structure comprises 519 residues: Asteroid homolog 1 (519 aa).

This sequence belongs to the asteroid family.

The protein resides in the cytoplasm. It is found in the mitochondrion. This is Asteroid homolog 1 (ast1) from Schizosaccharomyces pombe (strain 972 / ATCC 24843) (Fission yeast).